A 100-amino-acid chain; its full sequence is Urease subunit gamma (100 aa).

It belongs to the urease gamma subunit family. As to quaternary structure, heterotrimer of UreA (gamma), UreB (beta) and UreC (alpha) subunits. Three heterotrimers associate to form the active enzyme.

It is found in the cytoplasm. It catalyses the reaction urea + 2 H2O + H(+) = hydrogencarbonate + 2 NH4(+). It participates in nitrogen metabolism; urea degradation; CO(2) and NH(3) from urea (urease route): step 1/1. The sequence is that of Urease subunit gamma from Cupriavidus necator (strain ATCC 17699 / DSM 428 / KCTC 22496 / NCIMB 10442 / H16 / Stanier 337) (Ralstonia eutropha).